Here is a 446-residue protein sequence, read N- to C-terminus: N-succinylarginine dihydrolase (446 aa).

Substrate contacts are provided by residues 19–28, asparagine 110, and 137–138; these read AGLSFGNEAS and HR. Glutamate 174 is an active-site residue. Residue arginine 213 participates in substrate binding. Histidine 249 is an active-site residue. Substrate is bound by residues aspartate 251 and asparagine 364. Cysteine 370 (nucleophile) is an active-site residue.

The protein belongs to the succinylarginine dihydrolase family. As to quaternary structure, homodimer.

The enzyme catalyses N(2)-succinyl-L-arginine + 2 H2O + 2 H(+) = N(2)-succinyl-L-ornithine + 2 NH4(+) + CO2. The protein operates within amino-acid degradation; L-arginine degradation via AST pathway; L-glutamate and succinate from L-arginine: step 2/5. Catalyzes the hydrolysis of N(2)-succinylarginine into N(2)-succinylornithine, ammonia and CO(2). The chain is N-succinylarginine dihydrolase from Acinetobacter baylyi (strain ATCC 33305 / BD413 / ADP1).